Reading from the N-terminus, the 857-residue chain is DNA mismatch repair protein MutS (857 aa).

608 to 615 is an ATP binding site; sequence GPNMSGKS.

It belongs to the DNA mismatch repair MutS family.

In terms of biological role, this protein is involved in the repair of mismatches in DNA. It is possible that it carries out the mismatch recognition step. This protein has a weak ATPase activity. The protein is DNA mismatch repair protein MutS of Lacticaseibacillus casei (strain BL23) (Lactobacillus casei).